Consider the following 215-residue polypeptide: MADS-box transcription factor 4 (215 aa).

Residues 1 to 61 form the MADS-box domain; it reads MGRGKIEIKR…GKLSDYCTPK (61 aa). The K-box domain maps to 89-175; that stretch reads HKSLSAEIDR…AFRVHQQEVE (87 aa).

As to quaternary structure, may interact with the K-box of MADS16. Highly expressed in lodicules, at intermediate levels in stamens, and weakly in carpels. Expressed in pollen.

It is found in the nucleus. In terms of biological role, probable transcription factor involved in the development of floral organs. B-class protein required for normal development of lodicules and stamens (whorls 2 and 3). May function as a heterodimer with MADS16. The chain is MADS-box transcription factor 4 (MADS4) from Oryza sativa subsp. japonica (Rice).